We begin with the raw amino-acid sequence, 214 residues long: Cytochrome c biogenesis ATP-binding export protein CcmA (214 aa).

The 211-residue stretch at 4 to 214 folds into the ABC transporter domain; it reads LAVDQLTVSR…FDHGFDGAFL (211 aa). 36–43 provides a ligand contact to ATP; it reads GPNGIGKT.

Belongs to the ABC transporter superfamily. CcmA exporter (TC 3.A.1.107) family. The complex is composed of two ATP-binding proteins (CcmA) and two transmembrane proteins (CcmB).

It localises to the cell inner membrane. It carries out the reaction heme b(in) + ATP + H2O = heme b(out) + ADP + phosphate + H(+). Its function is as follows. Part of the ABC transporter complex CcmAB involved in the biogenesis of c-type cytochromes; once thought to export heme, this seems not to be the case, but its exact role is uncertain. Responsible for energy coupling to the transport system. The sequence is that of Cytochrome c biogenesis ATP-binding export protein CcmA from Rhodobacter capsulatus (strain ATCC BAA-309 / NBRC 16581 / SB1003).